The sequence spans 965 residues: Sarcosine oxidase subunit alpha (965 aa).

Positions 139, 158, 159, 160, 166, 205, 418, 423, and 425 each coordinate NAD(+). The (6R)-5,10-methylene-5,6,7,8-tetrahydrofolate site is built by T692 and E784.

The protein belongs to the GcvT family. Heterotetramer composed of subunits alpha (SoxA), beta (SoxB), gamma (SoxG) and delta (SoxD). It depends on NAD(+) as a cofactor.

It is found in the cytoplasm. It catalyses the reaction sarcosine + (6S)-5,6,7,8-tetrahydrofolate + O2 = (6R)-5,10-methylene-5,6,7,8-tetrahydrofolate + glycine + H2O2. The enzyme catalyses sarcosine + O2 + H2O = formaldehyde + glycine + H2O2. Its activity is regulated as follows. Inhibited by Zn(2+), Cu(2+), Cd(2+), Hg(2+), Ag(+), p-chloromercuribenzoate (p-CMB), iodoacetamide, N-ethylmaleimide, CN(-), o-phenanthroline and sodium lauryl sulfate. Its function is as follows. In the presence of tetrahydrofolate, catalyzes the oxidative demethylation of sarcosine to yield glycine, 5,10-methylenetetrahydrofolate and hydrogen peroxide. In the absence of tetrahydrofolate, catalyzes the oxidative demethylation of sarcosine to yield glycine, formaldehyde and hydrogen peroxide. Can also use N-methyl-L-alanine and N-ethyl-L-glycine. Is very specific for oxygen as an acceptor. The chain is Sarcosine oxidase subunit alpha from Corynebacterium sp. (strain U-96).